The following is a 182-amino-acid chain: Large ribosomal subunit protein uL15 (182 aa).

The tract at residues 1 to 52 (MDLSSLRPAKGAVKNKKRIGRGPGSGNGTTAGKGNKGQQSRSGYTRPVSEGG) is disordered. A compositionally biased stretch (gly residues) spans 21-35 (RGPGSGNGTTAGKGN).

It belongs to the universal ribosomal protein uL15 family. Part of the 50S ribosomal subunit.

Binds to the 23S rRNA. This Chlorobium phaeobacteroides (strain BS1) protein is Large ribosomal subunit protein uL15.